We begin with the raw amino-acid sequence, 118 residues long: Large ribosomal subunit protein bL19 (118 aa).

This sequence belongs to the bacterial ribosomal protein bL19 family.

Its function is as follows. This protein is located at the 30S-50S ribosomal subunit interface and may play a role in the structure and function of the aminoacyl-tRNA binding site. The protein is Large ribosomal subunit protein bL19 of Helicobacter acinonychis (strain Sheeba).